Here is a 355-residue protein sequence, read N- to C-terminus: Double-stranded RNA-binding protein 4 (355 aa).

2 DRBM domains span residues 4–73 (VYKG…SLTP) and 82–150 (AYKN…SIKN). Residues 149-188 (KNGNSNQTGSPTLPSERQEDVNSNVKSSPQEIHSQPSSKV) show a composition bias toward polar residues. A disordered region spans residues 149–193 (KNGNSNQTGSPTLPSERQEDVNSNVKSSPQEIHSQPSSKVVMTPD).

Heterodimer with DRB1 or DRB5. Interacts with DCL4 and cauliflower mosaic virus (CaMV) transactivator/viroplasmin protein. Interaction with CaMV transactivator/viroplasmin protein inhibits RNA silencing ability of DRB4. Expressed in roots, leaf vasculature, shoot apical meristem (SAM) and developing anthers.

The protein localises to the nucleus. In terms of biological role, double-stranded RNA-binding protein involved in RNA-mediated post-transcriptional gene silencing (PTGS). Functions in the trans-acting small interfering RNAs (ta-siRNAs) biogenesis by binding and assisting DICER-LIKE 4 (DCL4). Required for DCL4 activity. Required for the 21 nucleotide ta-siRNAs production of the TAS3 transcript in leaves but not in flowers. Plays an important role in silencing RNA of both DNA and RNA viruses. Involved with argonaute 7 (AGO7) and RDR6 in turnip crinkle virus (TCV) silencing. May not be directly involved in viral siRNA production. May stabilize the 21 nucleotide viral siRNAs and deliver them to the RISC complex. Targeted by the viral silencing suppressor (VSR) transactivator/viroplasmin (TAV) protein of the cauliflower mosaic virus (CaMV) that inactivates DRB4 function in RNA silencing. Probably not involved in the guide strand selection from RNA duplexes. Involved in leaf morphology through its function in ta-siRNA-mediated silencing. In Arabidopsis thaliana (Mouse-ear cress), this protein is Double-stranded RNA-binding protein 4 (DBR4).